The chain runs to 598 residues: Pentatricopeptide repeat-containing protein At1g09900 (598 aa).

PPR repeat units follow at residues 101 to 135 (EDVESNNHLRQMVRTGELEEGFKFLENMVYHGNVP), 136 to 170 (DIIPCTTLIRGFCRLGKTRKAAKILEILEGSGAVP), 171 to 201 (DVITYNVMISGYCKAGEINNALSVLDRMSVS), 203 to 237 (DVVTYNTILRSLCDSGKLKQAMEVLDRMLQRDCYP), 238 to 272 (DVITYTILIEATCRDSGVGHAMKLLDEMRDRGCTP), 273 to 307 (DVVTYNVLVNGICKEGRLDEAIKFLNDMPSSGCQP), 308 to 342 (NVITHNIILRSMCSTGRWMDAEKLLADMLRKGFSP), 343 to 377 (SVVTFNILINFLCRKGLLGRAIDILEKMPQHGCQP), 378 to 412 (NSLSYNPLLHGFCKEKKMDRAIEYLERMVSRGCYP), 413 to 447 (DIVTYNTMLTALCKDGKVEDAVEILNQLSSKGCSP), 448 to 482 (VLITYNTVIDGLAKAGKTGKAIKLLDEMRAKDLKP), 483 to 517 (DTITYSSLVGGLSREGKVDEAIKFFHEFERMGIRP), 518 to 552 (NAVTFNSIMLGLCKSRQTDRAIDFLVFMINRGCKP), and 553 to 587 (NETSYTILIEGLAYEGMAKEALELLNELCNKGLMK).

The protein belongs to the PPR family. P subfamily.

In Arabidopsis thaliana (Mouse-ear cress), this protein is Pentatricopeptide repeat-containing protein At1g09900.